Here is a 293-residue protein sequence, read N- to C-terminus: Fructose-bisphosphate aldolase (293 aa).

A D-glyceraldehyde 3-phosphate-binding site is contributed by Ser-50. Asp-85 (proton donor) is an active-site residue. Zn(2+) is bound by residues His-86, Asp-106, Glu-136, and His-178. Dihydroxyacetone phosphate is bound at residue Gly-179. Zn(2+) is bound at residue His-208. Dihydroxyacetone phosphate contacts are provided by residues 209-211 and 230-233; these read GGS and NVNT.

The protein belongs to the class II fructose-bisphosphate aldolase family. The cofactor is Zn(2+).

It catalyses the reaction beta-D-fructose 1,6-bisphosphate = D-glyceraldehyde 3-phosphate + dihydroxyacetone phosphate. It participates in carbohydrate degradation; glycolysis; D-glyceraldehyde 3-phosphate and glycerone phosphate from D-glucose: step 4/4. Catalyzes the aldol condensation of dihydroxyacetone phosphate (DHAP or glycerone-phosphate) with glyceraldehyde 3-phosphate (G3P) to form fructose 1,6-bisphosphate (FBP) in gluconeogenesis and the reverse reaction in glycolysis. The chain is Fructose-bisphosphate aldolase (fba) from Streptococcus pneumoniae serotype 4 (strain ATCC BAA-334 / TIGR4).